We begin with the raw amino-acid sequence, 295 residues long: NAD kinase (295 aa).

Asp-74 serves as the catalytic Proton acceptor. Residues 74 to 75 (DG), 148 to 149 (NE), Arg-176, Asp-178, and 189 to 194 (TAYAMS) contribute to the NAD(+) site.

Belongs to the NAD kinase family. Requires a divalent metal cation as cofactor.

It is found in the cytoplasm. The enzyme catalyses NAD(+) + ATP = ADP + NADP(+) + H(+). Its function is as follows. Involved in the regulation of the intracellular balance of NAD and NADP, and is a key enzyme in the biosynthesis of NADP. Catalyzes specifically the phosphorylation on 2'-hydroxyl of the adenosine moiety of NAD to yield NADP. The sequence is that of NAD kinase from Acidithiobacillus ferrooxidans (strain ATCC 23270 / DSM 14882 / CIP 104768 / NCIMB 8455) (Ferrobacillus ferrooxidans (strain ATCC 23270)).